Here is a 187-residue protein sequence, read N- to C-terminus: Large ribosomal subunit protein uL24c (187 aa).

The transit peptide at 1-41 directs the protein to the chloroplast; it reads MAALQSSFAGLSTSFFGQRFSPPLSLPPLVKSTEGPCLIQA.

The protein belongs to the universal ribosomal protein uL24 family. Part of the 50S ribosomal subunit.

It localises to the plastid. The protein resides in the chloroplast. Functionally, one of two assembly initiator proteins, it binds directly to the 5'-end of the 23S rRNA, where it nucleates assembly of the 50S subunit. The polypeptide is Large ribosomal subunit protein uL24c (RPL24) (Nicotiana tabacum (Common tobacco)).